The primary structure comprises 1388 residues: DNA-directed RNA polymerase subunit beta' (1388 aa).

Residues cysteine 70, cysteine 72, cysteine 85, and cysteine 88 each contribute to the Zn(2+) site. The Mg(2+) site is built by aspartate 461, aspartate 463, and aspartate 465. Residues cysteine 808, cysteine 882, cysteine 889, and cysteine 892 each contribute to the Zn(2+) site.

This sequence belongs to the RNA polymerase beta' chain family. In terms of assembly, the RNAP catalytic core consists of 2 alpha, 1 beta, 1 beta' and 1 omega subunit. When a sigma factor is associated with the core the holoenzyme is formed, which can initiate transcription. Mg(2+) is required as a cofactor. Requires Zn(2+) as cofactor.

The enzyme catalyses RNA(n) + a ribonucleoside 5'-triphosphate = RNA(n+1) + diphosphate. DNA-dependent RNA polymerase catalyzes the transcription of DNA into RNA using the four ribonucleoside triphosphates as substrates. This chain is DNA-directed RNA polymerase subunit beta', found in Acidiphilium cryptum (strain JF-5).